The primary structure comprises 120 residues: Putative iron-sulfur cluster insertion protein ErpA (120 aa).

Residues cysteine 49, cysteine 113, and cysteine 115 each coordinate iron-sulfur cluster.

It belongs to the HesB/IscA family. Homodimer. The cofactor is iron-sulfur cluster.

Functionally, required for insertion of 4Fe-4S clusters. The sequence is that of Putative iron-sulfur cluster insertion protein ErpA from Albidiferax ferrireducens (strain ATCC BAA-621 / DSM 15236 / T118) (Rhodoferax ferrireducens).